We begin with the raw amino-acid sequence, 281 residues long: Putative zinc-binding protein ORF11 (281 aa).

This is Putative zinc-binding protein ORF11 (ORF11) from Ictaluridae (bullhead catfishes).